The sequence spans 682 residues: Potassium-transporting ATPase ATP-binding subunit (682 aa).

4 helical membrane passes run 35 to 55 (VMFI…AMAG), 62 to 82 (ATFT…ANFA), 219 to 239 (IALT…TATI), and 254 to 274 (VLVA…LSAI). The active-site 4-aspartylphosphate intermediate is the Asp307. ATP-binding positions include Asp344, Glu348, 377–384 (FTAQTRMS), and Lys395. Asp518 and Asp522 together coordinate Mg(2+). Transmembrane regions (helical) follow at residues 588 to 608 (FAII…LNVM), 616 to 636 (AILS…PLAL), and 656 to 676 (IYGL…DLLL).

It belongs to the cation transport ATPase (P-type) (TC 3.A.3) family. Type IA subfamily. The system is composed of three essential subunits: KdpA, KdpB and KdpC.

It localises to the cell inner membrane. It catalyses the reaction K(+)(out) + ATP + H2O = K(+)(in) + ADP + phosphate + H(+). Functionally, part of the high-affinity ATP-driven potassium transport (or Kdp) system, which catalyzes the hydrolysis of ATP coupled with the electrogenic transport of potassium into the cytoplasm. This subunit is responsible for energy coupling to the transport system and for the release of the potassium ions to the cytoplasm. This is Potassium-transporting ATPase ATP-binding subunit from Klebsiella pneumoniae subsp. pneumoniae (strain ATCC 700721 / MGH 78578).